A 155-amino-acid chain; its full sequence is Ribonuclease H (155 aa).

The RNase H type-1 domain occupies Gln4–Thr145. Mg(2+) is bound by residues Asp13, Glu51, Asp73, and Asp137.

The protein belongs to the RNase H family. Monomer. Mg(2+) is required as a cofactor.

The protein localises to the cytoplasm. The enzyme catalyses Endonucleolytic cleavage to 5'-phosphomonoester.. Functionally, endonuclease that specifically degrades the RNA of RNA-DNA hybrids. The sequence is that of Ribonuclease H from Bartonella quintana (strain Toulouse) (Rochalimaea quintana).